The sequence spans 459 residues: 3-carboxy-cis,cis-muconate cycloisomerase (459 aa).

The protein belongs to the class-II fumarase/aspartase family. Homotetramer.

It is found in the cytoplasm. It catalyses the reaction 2-(carboxymethyl)-5-oxo-2,5-dihydro-2-furoate = 3-carboxy-cis,cis-muconate + H(+). It functions in the pathway aromatic compound metabolism; beta-ketoadipate pathway; 5-oxo-4,5-dihydro-2-furylacetate from 3-carboxy-cis,cis-muconate: step 1/2. Catalyzes an anti cycloisomerization. This is 3-carboxy-cis,cis-muconate cycloisomerase (pcaB) from Pseudomonas aeruginosa (strain ATCC 15692 / DSM 22644 / CIP 104116 / JCM 14847 / LMG 12228 / 1C / PRS 101 / PAO1).